A 215-amino-acid polypeptide reads, in one-letter code: Tricarboxylate transporter ALT9 (215 aa).

2 Solcar repeats span residues Thr-18–Met-106 and Cys-111–Leu-197. A run of 3 helical transmembrane segments spans residues Thr-19–Leu-39, Gly-112–Met-132, and Val-182–Val-202.

Belongs to the mitochondrial carrier (TC 2.A.29) family.

Its subcellular location is the mitochondrion inner membrane. Its pathway is mycotoxin biosynthesis. Its function is as follows. Tricarboxylate transporter; part of the gene cluster that mediates the biosynthesis of the host-selective toxins (HSTs) AAL-toxins, sphinganine-analog mycotoxins responsible for Alternaria stem canker on tomato by the tomato pathotype. The biosynthesis starts with the polyketide synthase ALT1-catalyzed C-16 carbon chain assembly from one starter acetyl-CoA unit with malonyl-CoA extender units. ALT1 also selectively transfers methyl groups at the first and the third cycle of chain elongation for AAL toxin. The C-16 polyketide chain is released from the enzyme by a nucleophilic attack of a carbanion, which is derived from R-carbon of glycin by decarboxylation, on the carbonyl carbon of polyketide acyl chain. This step is probably catalyzed by a pyridoxal 5'-phosphate-dependent aminoacyl transferase ALT4. The respective functions of the other enzymes encoded by the cluster have still to be elucidated. The sphingosine N-acyltransferase-like protein ALT7 seems not to act as a resistance/self-tolerance factor against the toxin in the toxin biosynthetic gene cluster, contrary to what is expected. This Alternaria alternata (Alternaria rot fungus) protein is Tricarboxylate transporter ALT9.